A 132-amino-acid chain; its full sequence is Small ribosomal subunit protein uS8 (132 aa).

Belongs to the universal ribosomal protein uS8 family. In terms of assembly, part of the 30S ribosomal subunit. Contacts proteins S5 and S12.

In terms of biological role, one of the primary rRNA binding proteins, it binds directly to 16S rRNA central domain where it helps coordinate assembly of the platform of the 30S subunit. The chain is Small ribosomal subunit protein uS8 from Syntrophomonas wolfei subsp. wolfei (strain DSM 2245B / Goettingen).